A 169-amino-acid polypeptide reads, in one-letter code: Transmembrane protein 89 (169 aa).

An N-terminal signal peptide occupies residues 1–22 (MLYTLLLVPSLFLLVMPVPSQG). The Extracellular segment spans residues 23 to 75 (WSRPLWYQVGLDLQPWGCQPNSPDIWGCQPNSLDSCKNSLGCPGYWLGLGGNR). The chain crosses the membrane as a helical span at residues 76–96 (IYPVAGVTITTTMLLVVSRVI). At 97-169 (VHRWRAKVAK…QIKGSPPQSG (73 aa)) the chain is on the cytoplasmic side.

It is found in the membrane. The protein is Transmembrane protein 89 (Tmem89) of Mus musculus (Mouse).